We begin with the raw amino-acid sequence, 132 residues long: Small ribosomal subunit protein uS8 (132 aa).

It belongs to the universal ribosomal protein uS8 family. Part of the 30S ribosomal subunit. Contacts proteins S5 and S12.

Its function is as follows. One of the primary rRNA binding proteins, it binds directly to 16S rRNA central domain where it helps coordinate assembly of the platform of the 30S subunit. In Gluconacetobacter diazotrophicus (strain ATCC 49037 / DSM 5601 / CCUG 37298 / CIP 103539 / LMG 7603 / PAl5), this protein is Small ribosomal subunit protein uS8.